A 77-amino-acid polypeptide reads, in one-letter code: U10-lycotoxin-Ls1b (77 aa).

The signal sequence occupies residues 1 to 20 (MKLIIFTGLVLFAIVSLIEA). Positions 21–26 (EEESGR) are excised as a propeptide.

The protein belongs to the neurotoxin 19 (CSTX) family. 09 (U10-Lctx) subfamily. Contains 4 disulfide bonds. As to expression, expressed by the venom gland.

It is found in the secreted. The chain is U10-lycotoxin-Ls1b from Lycosa singoriensis (Wolf spider).